A 360-amino-acid chain; its full sequence is Peptide chain release factor 1 (360 aa).

At Q235 the chain carries N5-methylglutamine. Residues 280 to 293 (DKQSHEQQAKEAAT) are compositionally biased toward basic and acidic residues. Positions 280–300 (DKQSHEQQAKEAATRKSLIGS) are disordered.

Belongs to the prokaryotic/mitochondrial release factor family. Methylated by PrmC. Methylation increases the termination efficiency of RF1.

It is found in the cytoplasm. Its function is as follows. Peptide chain release factor 1 directs the termination of translation in response to the peptide chain termination codons UAG and UAA. The chain is Peptide chain release factor 1 from Paraburkholderia phytofirmans (strain DSM 17436 / LMG 22146 / PsJN) (Burkholderia phytofirmans).